A 226-amino-acid polypeptide reads, in one-letter code: 2-C-methyl-D-erythritol 4-phosphate cytidylyltransferase (226 aa).

Belongs to the IspD/TarI cytidylyltransferase family. IspD subfamily.

It carries out the reaction 2-C-methyl-D-erythritol 4-phosphate + CTP + H(+) = 4-CDP-2-C-methyl-D-erythritol + diphosphate. The protein operates within isoprenoid biosynthesis; isopentenyl diphosphate biosynthesis via DXP pathway; isopentenyl diphosphate from 1-deoxy-D-xylulose 5-phosphate: step 2/6. Its function is as follows. Catalyzes the formation of 4-diphosphocytidyl-2-C-methyl-D-erythritol from CTP and 2-C-methyl-D-erythritol 4-phosphate (MEP). This Thermosipho africanus (strain TCF52B) protein is 2-C-methyl-D-erythritol 4-phosphate cytidylyltransferase.